Here is a 144-residue protein sequence, read N- to C-terminus: Crossover junction endodeoxyribonuclease Hjc (144 aa).

Glu-12 serves as a coordination point for Mg(2+). The active site involves Ser-32. Positions 42 and 55 each coordinate Mg(2+).

The protein belongs to the Holliday junction resolvase Hjc family. In terms of assembly, homodimer; forms a 2:1 complex with Hel308 (Hjm). May form a complex with Holliday junction DNA, Hjc and Hjm. It depends on Mg(2+) as a cofactor.

The catalysed reaction is Endonucleolytic cleavage at a junction such as a reciprocal single-stranded crossover between two homologous DNA duplexes (Holliday junction).. Its activity is regulated as follows. Cleavage stimulated by PCNA123 and PCNA323 and by RadC2. Its function is as follows. A structure-specific endonuclease that resolves Holliday junction (HJ) intermediates during genetic recombination. Cleaves 4-way DNA junctions introducing paired nicks in opposing strands, leaving a 5'-terminal phosphate and a 3'-terminal hydroxyl group that are subsequently ligated to produce recombinant products. Inhibits the helicase activity of Hel308 (Hjm). This is Crossover junction endodeoxyribonuclease Hjc from Sulfurisphaera tokodaii (strain DSM 16993 / JCM 10545 / NBRC 100140 / 7) (Sulfolobus tokodaii).